A 180-amino-acid polypeptide reads, in one-letter code: Large ribosomal subunit protein uL16 (180 aa).

It belongs to the universal ribosomal protein uL16 family.

The sequence is that of Large ribosomal subunit protein uL16 from Thermococcus sibiricus (strain DSM 12597 / MM 739).